A 472-amino-acid polypeptide reads, in one-letter code: Squamosa promoter-binding-like protein 18 (472 aa).

The segment at 89-110 is disordered; the sequence is AKVPPSTSTLKRPRGGGGGGGG. Residues 112–189 form an SBP-type zinc finger; it reads CPSCAVDGCK…DGHNRRRRKP (78 aa). Positions 115, 120, 137, 140, 156, 159, 163, and 175 each coordinate Zn(2+). The Bipartite nuclear localization signal signature appears at 172–188; that stretch reads KRSCRKRLDGHNRRRRK. 3 disordered regions span residues 179-218, 233-261, and 358-381; these read LDGHNRRRRKPQADSMSSGSFMTSQQGTRFASFTPPRPEP, SHHHHPHPVMTSRQPHFVGSPSSATTAAF, and SVDVSRMVQPSPAAAAGAEHHHHH. Residues 192–209 are compositionally biased toward polar residues; the sequence is DSMSSGSFMTSQQGTRFA. The span at 252–261 shows a compositional bias: low complexity; sequence SPSSATTAAF.

Expressed in young panicles.

It localises to the nucleus. Functionally, trans-acting factor that binds specifically to the consensus nucleotide sequence 5'-TNCGTACAA-3'. May be involved in panicle development. The chain is Squamosa promoter-binding-like protein 18 (SPL18) from Oryza sativa subsp. japonica (Rice).